Here is an 801-residue protein sequence, read N- to C-terminus: Phosphatidylinositol 4-kinase beta (801 aa).

3 disordered regions span residues 1–29, 101–121, and 250–304; these read MGDT…GGSL, EDEM…RRRQ, and RKRE…EDEP. N-acetylglycine is present on Gly-2. The interaction with ACBD3 stretch occupies residues 2-68; it reads GDTAVEPAPL…VRLLHGAVAV (67 aa). The PIK helical domain occupies 29–242; that stretch reads LLSVITEGVG…GTKLRKLILS (214 aa). Position 258 is a phosphoserine (Ser-258). Polar residues predominate over residues 259-268; it reads PALNTGLSPS. A Phosphothreonine modification is found at Thr-263. Residues Ser-266, Ser-275, Ser-277, Ser-284, Ser-294, and Ser-413 each carry the phosphoserine modification. The segment covering 278–294 has biased composition (low complexity); that stretch reads DATASISLSSSLKRTAS. Thr-423 carries the phosphothreonine modification. Phosphoserine is present on Ser-496. 2 positions are modified to phosphothreonine: Thr-502 and Thr-504. A PI3K/PI4K catalytic domain is found at 520 to 786; it reads EPWQEKVRRI…MVDGSMRSIT (267 aa). The interval 526-532 is G-loop; sequence VRRIREG. Residues 653–661 are catalytic loop; sequence QVKDRHNGN. An activation loop region spans residues 672–696; the sequence is HIDFGFILSSSPRNLGFETSAFKLT.

It belongs to the PI3/PI4-kinase family. Type III PI4K subfamily. Interacts with ARF1 and ARF3 in the Golgi complex, but not with ARF4, ARF5 or ARF6. Interacts with NCS1/FREQ in a calcium-independent manner. Interacts with CALN1/CABP8 and CALN2/CABP7; in a calcium-dependent manner; this interaction competes with NCS1/FREQ binding. Interacts with ACBD3. Interacts with ARMH3, YWHAB, YWHAE, YWHAG, YWHAH, YWHAQ, YWHAZ and SFN. Interacts with GGA2 (via VHS domain); the interaction is important for PI4KB location at the Golgi apparatus membrane. Interacts with ATG9A. Mg(2+) is required as a cofactor. Mn(2+) serves as cofactor.

It is found in the endomembrane system. Its subcellular location is the mitochondrion outer membrane. The protein localises to the rough endoplasmic reticulum membrane. It localises to the golgi apparatus. The protein resides in the golgi apparatus membrane. The catalysed reaction is a 1,2-diacyl-sn-glycero-3-phospho-(1D-myo-inositol) + ATP = a 1,2-diacyl-sn-glycero-3-phospho-(1D-myo-inositol 4-phosphate) + ADP + H(+). Inhibited by wortmannin. Increased kinase activity upon interaction with NCS1/FREQ. Its function is as follows. Phosphorylates phosphatidylinositol (PI) in the first committed step in the production of the second messenger inositol-1,4,5,-trisphosphate (PIP). May regulate Golgi disintegration/reorganization during mitosis, possibly via its phosphorylation. Involved in Golgi-to-plasma membrane trafficking. May play an important role in the inner ear development. The polypeptide is Phosphatidylinositol 4-kinase beta (PI4KB) (Sorex araneus (Eurasian common shrew)).